A 560-amino-acid chain; its full sequence is Alpha-keto-acid decarboxylase (560 aa).

Residue Glu-61 participates in thiamine diphosphate binding. Residues 396 to 478 (TSFYGMADHR…VVVNNDGYTV (83 aa)) form a thiamine pyrophosphate binding region. Asp-446, Asn-473, and Gly-475 together coordinate Mg(2+).

It belongs to the TPP enzyme family. It depends on a metal cation as a cofactor. Thiamine diphosphate is required as a cofactor.

Its function is as follows. Decarboxylates branched-chain and aromatic alpha-keto acids to aldehydes. The polypeptide is Alpha-keto-acid decarboxylase (kdc) (Mycobacterium tuberculosis (strain CDC 1551 / Oshkosh)).